The chain runs to 641 residues: Choline O-acetyltransferase (641 aa).

The segment at 1–29 (MPILEKTPPKMAAKSPSSEEEPGLPKLPV) is disordered. Position 17 is a phosphoserine (serine 17). Catalysis depends on histidine 335, which acts as the Proton acceptor. Phosphoserine is present on serine 366. CoA is bound by residues 413 to 425 (GKTF…CSPD), serine 451, and glutamine 552. The disordered stretch occupies residues 619–641 (QSGMGKPLATKEKVTRPSQVHQP).

It belongs to the carnitine/choline acetyltransferase family.

The catalysed reaction is choline + acetyl-CoA = acetylcholine + CoA. Functionally, catalyzes the reversible synthesis of acetylcholine (ACh) from acetyl CoA and choline at cholinergic synapses. The protein is Choline O-acetyltransferase (CHAT) of Sus scrofa (Pig).